Consider the following 993-residue polypeptide: Replication protein 1a (993 aa).

Residues 51–409 (NVLGVKDSEV…TIVINGMSMQ (359 aa)) form a methyltransferase region. The Alphavirus-like MT domain maps to 72–290 (HLTQQEFAPH…HDWENIKSFL (219 aa)). The disordered stretch occupies residues 545-576 (SDRPEAPSSTPDDTADVCGKEQEVSELDSLSA). In terms of domain architecture, (+)RNA virus helicase ATP-binding spans 687–838 (CVICNSESLS…KIIPDETSDA (152 aa)). Residues 712–975 (VDGVAGCGKT…LTRHKVTFRY (264 aa)) form an ATP-dependent helicase region. 714-721 (GVAGCGKT) is a binding site for ATP. Residues 839-993 (DTTFRSPQDV…DLIAECIARA (155 aa)) form the (+)RNA virus helicase C-terminal domain.

This sequence belongs to the bromoviridae replication protein 1a family. As to quaternary structure, interacts with RNA-directed RNA polymerase 2a.

The protein resides in the host endoplasmic reticulum membrane. Its function is as follows. Involved in the virus replication. Contains a helicase domain and a methyltransferase domain. The methyltransferase domain is probably involved in viral RNA capping. Involved in the formation of ER membrane spherular invaginations in which RNA replication complexes form. The chain is Replication protein 1a from Cucumis sativus (Cucumber).